The following is a 274-amino-acid chain: uncharacterized protein (274 aa).

Belongs to the PhoU family.

This is an uncharacterized protein from Deinococcus radiodurans (strain ATCC 13939 / DSM 20539 / JCM 16871 / CCUG 27074 / LMG 4051 / NBRC 15346 / NCIMB 9279 / VKM B-1422 / R1).